Consider the following 640-residue polypeptide: Chaperone protein DnaK (640 aa).

Residue threonine 199 is modified to Phosphothreonine; by autocatalysis. Low complexity predominate over residues 606–621; that stretch reads QQAAGAGAQQADGTGK. The disordered stretch occupies residues 606–640; that stretch reads QQAAGAGAQQADGTGKAADDGVVDAEFEEVKEDNK. The segment covering 626–640 has biased composition (acidic residues); sequence GVVDAEFEEVKEDNK.

Belongs to the heat shock protein 70 family.

Acts as a chaperone. In Cellvibrio japonicus (strain Ueda107) (Pseudomonas fluorescens subsp. cellulosa), this protein is Chaperone protein DnaK.